The following is a 1754-amino-acid chain: Intraflagellar transport protein 172 homolog (1754 aa).

WD repeat units lie at residues 14 to 53 (EQIQ…RDKF), 64 to 103 (KNSY…NDKK), 110 to 149 (PQAS…QSLY), 151 to 190 (GDSI…EPLG), 194 to 232 (QHPV…RTFD), 283 to 322 (ACLY…TVWQ), and 519 to 557 (TLLS…EHVT). TPR repeat units lie at residues 623 to 656 (KAMW…SKAY), 690 to 723 (GSDL…DEAV), 748 to 781 (SEQQ…ARAA), 807 to 840 (SELY…ARAL), 852 to 885 (TALE…QKAL), 1041 to 1074 (RGKL…EDGY), 1140 to 1166 (DEVH…FLKA), 1167 to 1199 (NKPR…AVGE), 1211 to 1250 (TSNY…AEEH), 1282 to 1315 (SRSY…NAED), and 1698 to 1733 (FPVR…SPGS).

The protein belongs to the IFT172 family.

Its subcellular location is the cell projection. It is found in the cilium. Required for the maintenance and formation of cilia. The protein is Intraflagellar transport protein 172 homolog of Drosophila melanogaster (Fruit fly).